The following is a 173-amino-acid chain: Peptide deformylase (173 aa).

Residues Cys94 and His136 each coordinate Fe cation. Residue Glu137 is part of the active site. His140 contributes to the Fe cation binding site.

It belongs to the polypeptide deformylase family. Fe(2+) serves as cofactor.

The catalysed reaction is N-terminal N-formyl-L-methionyl-[peptide] + H2O = N-terminal L-methionyl-[peptide] + formate. In terms of biological role, removes the formyl group from the N-terminal Met of newly synthesized proteins. Requires at least a dipeptide for an efficient rate of reaction. N-terminal L-methionine is a prerequisite for activity but the enzyme has broad specificity at other positions. The polypeptide is Peptide deformylase (Desulfosudis oleivorans (strain DSM 6200 / JCM 39069 / Hxd3) (Desulfococcus oleovorans)).